A 428-amino-acid polypeptide reads, in one-letter code: Enolase (428 aa).

Gln-163 is a (2R)-2-phosphoglycerate binding site. Residue Glu-205 is the Proton donor of the active site. Mg(2+)-binding residues include Asp-242, Glu-285, and Asp-312. 4 residues coordinate (2R)-2-phosphoglycerate: Lys-337, Arg-366, Ser-367, and Lys-388. Residue Lys-337 is the Proton acceptor of the active site.

It belongs to the enolase family. It depends on Mg(2+) as a cofactor.

The protein resides in the cytoplasm. Its subcellular location is the secreted. It is found in the cell surface. The enzyme catalyses (2R)-2-phosphoglycerate = phosphoenolpyruvate + H2O. Its pathway is carbohydrate degradation; glycolysis; pyruvate from D-glyceraldehyde 3-phosphate: step 4/5. In terms of biological role, catalyzes the reversible conversion of 2-phosphoglycerate (2-PG) into phosphoenolpyruvate (PEP). It is essential for the degradation of carbohydrates via glycolysis. This chain is Enolase, found in Finegoldia magna (strain ATCC 29328 / DSM 20472 / WAL 2508) (Peptostreptococcus magnus).